Here is a 299-residue protein sequence, read N- to C-terminus: Palmitoyltransferase ZDHHC3 (299 aa).

Topologically, residues 1 to 47 (MMLIPTHHFRDIERKPEYLQPEKCAPPPFPGPVGTMWFIRDGCGIAC) are cytoplasmic. Phosphotyrosine is present on Y18. The chain crosses the membrane as a helical span at residues 48–68 (AIVTWFLVLYAEFVVLFVMLI). At 69–72 (PSRD) the chain is on the lumenal side. The chain crosses the membrane as a helical span at residues 73 to 93 (YAYSIINGIVFNLLAFLALAS). The Cytoplasmic portion of the chain corresponds to 94–171 (HCRAMLTDPG…NCVGENNQKY (78 aa)). Residues 128-254 (KCPKCCSIKP…DETGIEQLKK (127 aa)) enclose the DHHC domain. The S-palmitoyl cysteine moiety is linked to residue C146. Residue C157 is the S-palmitoyl cysteine intermediate of the active site. The chain crosses the membrane as a helical span at residues 172-192 (FVLFTMYIALISLHALIMVGF). Residues 193 to 214 (HFLHCFEEDWTKCSSFSPPTTV) are Lumenal-facing. The chain crosses the membrane as a helical span at residues 215–235 (ILLILLCFEALLFLIFTSVMF). At 236-299 (GTQVHSICTD…GKADPYQYVV (64 aa)) the chain is on the cytoplasmic side.

Belongs to the DHHC palmitoyltransferase family. Monomer. Homooligomers. The monomeric form has a higher catalytic activity. Forms heterooligomers with ZDHHC7. Interacts with TNFRSF10A. In terms of processing, phosphorylation by FGFR1 and SRC probably regulates the palmitoyltransferase activity. Post-translationally, autopalmitoylated.

The protein resides in the golgi apparatus membrane. It carries out the reaction L-cysteinyl-[protein] + hexadecanoyl-CoA = S-hexadecanoyl-L-cysteinyl-[protein] + CoA. It catalyses the reaction L-cysteinyl-[protein] + tetradecanoyl-CoA = S-tetradecanoyl-L-cysteinyl-[protein] + CoA. The enzyme catalyses L-cysteinyl-[protein] + octadecanoyl-CoA = S-octadecanoyl-L-cysteinyl-[protein] + CoA. Functionally, golgi-localized palmitoyltransferase that catalyzes the addition of palmitate onto various protein substrates. Has no stringent fatty acid selectivity and in addition to palmitate can also transfer onto target proteins myristate from tetradecanoyl-CoA and stearate from octadecanoyl-CoA. Plays an important role in G protein-coupled receptor signaling pathways involving GNAQ and potentially other heterotrimeric G proteins by regulating their dynamic association with the plasma membrane. Palmitoylates ITGA6 and ITGB4, thereby regulating the alpha-6/beta-4 integrin localization, expression and function in cell adhesion to laminin. Plays a role in the TRAIL-activated apoptotic signaling pathway most probably through the palmitoylation and localization to the plasma membrane of TNFRSF10A. In the brain, by palmitoylating the gamma subunit GABRG2 of GABA(A) receptors and regulating their postsynaptic accumulation, plays a role in synaptic GABAergic inhibitory function and GABAergic innervation. Palmitoylates the neuronal protein GAP43 which is also involved in the formation of GABAergic synapses. Palmitoylates NCDN thereby regulating its association with endosome membranes. Probably palmitoylates PRCD and is involved in its proper localization within the photoreceptor. Could mediate the palmitoylation of NCAM1 and regulate neurite outgrowth. Could palmitoylate DNAJC5 and regulate its localization to Golgi membranes. Also constitutively palmitoylates DLG4. May also palmitoylate SNAP25. Could palmitoylate the glutamate receptors GRIA1 and GRIA2 but this has not been confirmed in vivo. Could also palmitoylate the D(2) dopamine receptor DRD2. May also palmitoylate LAMTOR1, promoting its localization to lysosomal membranes. Palmitoylates the Toll-like receptor 9/TLR9 in the Golgi and thereby regulates TLR9 trafficking to endosomes. May palmitoylate CALHM1 and CALHM3 subunits of gustatory voltage-gated ion channels and modulate channel gating and kinetics. In Rattus norvegicus (Rat), this protein is Palmitoyltransferase ZDHHC3.